Reading from the N-terminus, the 264-residue chain is Thymidylate synthase (264 aa).

A dUMP-binding site is contributed by Arg21. Residue His51 coordinates (6R)-5,10-methylene-5,6,7,8-tetrahydrofolate. 126 to 127 (RR) serves as a coordination point for dUMP. Cys146 acts as the Nucleophile in catalysis. DUMP-binding positions include 166-169 (RSAD), Asn177, and 207-209 (HLY). Asp169 contacts (6R)-5,10-methylene-5,6,7,8-tetrahydrofolate. Ala263 is a binding site for (6R)-5,10-methylene-5,6,7,8-tetrahydrofolate.

Belongs to the thymidylate synthase family. Bacterial-type ThyA subfamily. In terms of assembly, homodimer.

It is found in the cytoplasm. The catalysed reaction is dUMP + (6R)-5,10-methylene-5,6,7,8-tetrahydrofolate = 7,8-dihydrofolate + dTMP. It participates in pyrimidine metabolism; dTTP biosynthesis. Catalyzes the reductive methylation of 2'-deoxyuridine-5'-monophosphate (dUMP) to 2'-deoxythymidine-5'-monophosphate (dTMP) while utilizing 5,10-methylenetetrahydrofolate (mTHF) as the methyl donor and reductant in the reaction, yielding dihydrofolate (DHF) as a by-product. This enzymatic reaction provides an intracellular de novo source of dTMP, an essential precursor for DNA biosynthesis. This chain is Thymidylate synthase, found in Methylobacterium nodulans (strain LMG 21967 / CNCM I-2342 / ORS 2060).